A 284-amino-acid chain; its full sequence is SF-assemblin (284 aa).

The tract at residues 1-30 is disordered; that stretch reads PTPSPEARVASRPFLDSPLPGSPRSGSPTG. The tract at residues 1 to 38 is nonhelical region; it reads PTPSPEARVASRPFLDSPLPGSPRSGSPTGYITATKAI. Low complexity predominate over residues 17 to 30; that stretch reads SPLPGSPRSGSPTG. The segment at 39 to 284 is rod; it reads SAGKLEHVAE…QDGLRIVNNS (246 aa). Coiled-coil stretches lie at residues 56 to 102 and 239 to 268; these read EIEL…QIQV and LDEI…QAVN.

The protein belongs to the SF-assemblin family. Post-translationally, consists of at least four isoforms including two phosphorylated.

It localises to the cytoplasm. The protein resides in the cytoskeleton. In terms of biological role, major component of the striated microtubule-associated fibers (SMAFs; system-I-fibers). The polypeptide is SF-assemblin (Spermatozopsis similis (Green alga)).